The primary structure comprises 610 residues: Butyryl-CoA dehydrogenase Swol_1933 (610 aa).

The active-site Proton acceptor is the E451.

Belongs to the acyl-CoA dehydrogenase family. Requires FAD as cofactor.

Its subcellular location is the cytoplasm. It carries out the reaction butanoyl-CoA + oxidized [electron-transfer flavoprotein] + H(+) = (2E)-butenoyl-CoA + reduced [electron-transfer flavoprotein]. The catalysed reaction is a short-chain 2,3-saturated fatty acyl-CoA + oxidized [electron-transfer flavoprotein] + H(+) = a short-chain (2E)-enoyl-CoA + reduced [electron-transfer flavoprotein]. It participates in lipid metabolism; butanoate metabolism. Involved in syntrophic growth of S.wolfei with butyrate, as part of the butyrate oxidation pathway. Catalyzes the oxidation of butanoyl-CoA to crotonyl-CoA. Probably passes the electrons released by this reaction on to electron-transfer flavoproteins (EtfAB) to finally generate hydrogen and/or formate. In Syntrophomonas wolfei subsp. wolfei (strain DSM 2245B / Goettingen), this protein is Butyryl-CoA dehydrogenase Swol_1933.